A 185-amino-acid polypeptide reads, in one-letter code: Ribosome-recycling factor (185 aa).

It belongs to the RRF family.

The protein resides in the cytoplasm. In terms of biological role, responsible for the release of ribosomes from messenger RNA at the termination of protein biosynthesis. May increase the efficiency of translation by recycling ribosomes from one round of translation to another. The polypeptide is Ribosome-recycling factor (Campylobacter jejuni subsp. jejuni serotype O:2 (strain ATCC 700819 / NCTC 11168)).